The following is a 1842-amino-acid chain: Plexin-B2 (1842 aa).

The signal sequence occupies residues 1–19 (MALPLWALTFLGLTGLGLS). Positions 20–468 (LRSRKPESFR…TQDKVFRLPV (449 aa)) constitute a Sema domain. The Extracellular segment spans residues 20–1201 (LRSRKPESFR…EYDTRASDVP (1182 aa)). Disulfide bonds link C78/C87 and C112/C120. N127 and N242 each carry an N-linked (GlcNAc...) asparagine glycan. 3 cysteine pairs are disulfide-bonded: C250/C366, C266/C313, and C331/C353. N393 and N451 each carry an N-linked (GlcNAc...) asparagine glycan. 5 cysteine pairs are disulfide-bonded: C471-C488, C477-C520, C480-C497, C491-C503, and C557-C576. N798 carries N-linked (GlcNAc...) asparagine glycosylation. IPT/TIG domains follow at residues 806-895 (PVIT…QFTY), 898-982 (PQPL…SFTY), and 986-1095 (PMIR…VFEY). N-linked (GlcNAc...) asparagine glycosylation is found at N919, N1053, and N1072. The chain crosses the membrane as a helical span at residues 1202–1222 (LSLILPLVMVPMVFIIVVSIY). At 1223-1842 (CYWRKSQQAE…AALENKVTDL (620 aa)) the chain is on the cytoplasmic side. 3 positions are modified to phosphoserine: S1240, S1248, and S1574.

This sequence belongs to the plexin family. Monomer, and heterodimer with PLXNB1. Interacts with MET, ARHGEF11 and ARHGEF12. May also interact with MST1R. In terms of tissue distribution, detected in macrophages from spleen and bone marrow (at protein level). Detected in granule cells in the developing cerebellum, dentate gyrus and olfactory bulb. Expressed in neurons and glia in the developing hippocampus.

Its subcellular location is the cell membrane. Cell surface receptor for SEMA4C, SEMA4D and SEMA4G that plays an important role in cell-cell signaling. Plays a role in glutamatergic synapse development and is required for SEMA4A-mediated excitatory synapse development. Binding to class 4 semaphorins promotes downstream activation of RHOA and phosphorylation of ERBB2 at 'Tyr-1248'. Also acts as a cell surface receptor for angiogenin (ANG); promoting ANG endocytosis and translocation to the cytoplasm or nucleus. Required for normal differentiation and migration of neuronal cells during brain corticogenesis and for normal embryonic brain development. Regulates the migration of cerebellar granule cells in the developing brain. Plays a role in RHOA activation and subsequent changes of the actin cytoskeleton. Plays a role in axon guidance, invasive growth and cell migration. May modulate the activity of RAC1 and CDC42. Down-regulates macrophage migration in wound-healing assays (in vitro). The protein is Plexin-B2 of Mus musculus (Mouse).